The sequence spans 127 residues: MAYVRLTSLAVLFFLAASVMKTEGGLPTCGETCTLGTCYVPDCSCSWPICMKNHIIAANAKTVNEHRLLCTSHEDCFKKGTGNYCASFPDSNIHFGWCFHAESEGYLLKDFMNMSKDDLKMPLESTN.

An N-terminal signal peptide occupies residues M1 to G24. Positions G25–N53 form a cross-link, cyclopeptide (Gly-Asn). Cystine bridges form between C29/C43, C33/C45, and C38/C50. The propeptide at H54–N127 is removed in mature form.

Contains 3 disulfide bonds. Post-translationally, this is a cyclic peptide. Expressed in flower, stem, shoot, leaf and seed but not in root, pod and nodule (at protein level).

Its function is as follows. Probably participates in a plant defense mechanism. Not active against Gram-negative bacteria E.coli ATCC 700926, K.pneumoniae ATTC 13883 and P.aeruginosa ATCC 39018 at concentration up to 100 uM. Has cytotoxic and hemolytic activity. This is Cliotide T3 from Clitoria ternatea (Butterfly pea).